Reading from the N-terminus, the 691-residue chain is MLRGQEERKYSIRKYSIGVVSVLAATMFVVTSHEAQASEKIPTTNAAAQKETLNQPGEQGNAITSHQMQSGKQLDDMHKENGKSGTVTEGKDMLQSSKHQSTQNSKIIRTQNDNQVKQDSERQGSKQSHQNNATNKTERQNDQIQNTHHAERNGSQSTTSQSNDVDKSQPSIPAQKVIPNHDKAAPTSTTPPSNDKTAPKSTKEQDATTDKHPNQQDTHQPAHQIIDAKQDDNVHQSNQKPQVGDLSKHIDGQNSPEKPTDKNTDNKQLIKDALQAPKTRSTTNAAADAKKVRPLKANQVQPLNKYPVVFVHGFLGLVGDNAPALYPNYWGGNKYKVIEELRKQGYNVHQASVSAFGSNYDRAVELYYYIKGGRVDYGAAHAAKYGHERYGKTYKGIMPNWEPGKKVHLVGHSMGGQTIRLMEEFLRNGNKEEIAYHKAHGGEISPLFTGGHNNMVASITTLATPHNGSQAADKFGNTEAVRKIMFALNRFMGNKYSNIDLGLTQWGFKQLPNESYIDYIKRVSKSKIWTSDDNAAYDLTLNGSAKLNNMTSMNPNITYTTYTGVSSHTGPLGYENPDLGTFFLMDTTSRIIGHDAREEWRKNDGVVPVISSLHPSNQPFVNVTNDEPATRRGIWQVKPIIQGWDHVDFIGVDFLDFKRKGAELANFYTGIINDLLRVEATESKGTQLKAS.

The N-terminal stretch at 1–37 (MLRGQEERKYSIRKYSIGVVSVLAATMFVVTSHEAQA) is a signal peptide. The interval 34-267 (EAQASEKIPT…KPTDKNTDNK (234 aa)) is disordered. The propeptide occupies 38 to 296 (SEKIPTTNAA…ADAKKVRPLK (259 aa)). Positions 41 to 72 (IPTTNAAAQKETLNQPGEQGNAITSHQMQSGK) are enriched in polar residues. Residues 73–82 (QLDDMHKENG) are compositionally biased toward basic and acidic residues. 4 stretches are compositionally biased toward polar residues: residues 94 to 115 (LQSS…NDNQ), 125 to 135 (SKQSHQNNATN), 142 to 172 (DQIQ…QPSI), and 186 to 196 (PTSTTPPSNDK). 2 stretches are compositionally biased toward basic and acidic residues: residues 197 to 214 (TAPK…KHPN) and 258 to 267 (KPTDKNTDNK). S413 acts as the Nucleophile in catalysis. G580 provides a ligand contact to Ca(2+). Catalysis depends on D604, which acts as the Charge relay system. D645 is a binding site for Ca(2+). The active-site Charge relay system is H646. Residues D648, D653, and D656 each coordinate Ca(2+).

The protein belongs to the AB hydrolase superfamily. Lipase family.

The protein resides in the secreted. It carries out the reaction a triacylglycerol + H2O = a diacylglycerol + a fatty acid + H(+). In Staphylococcus aureus (strain MRSA252), this protein is Lipase 2 (lip2).